The sequence spans 219 residues: Ribose-5-phosphate isomerase A (219 aa).

Substrate contacts are provided by residues 28-31, 81-84, and 94-97; these read TGST, DGAD, and KGGG. The active-site Proton acceptor is the Glu-103. Residue Lys-121 participates in substrate binding.

This sequence belongs to the ribose 5-phosphate isomerase family. As to quaternary structure, homodimer.

The catalysed reaction is aldehydo-D-ribose 5-phosphate = D-ribulose 5-phosphate. Its pathway is carbohydrate degradation; pentose phosphate pathway; D-ribose 5-phosphate from D-ribulose 5-phosphate (non-oxidative stage): step 1/1. In terms of biological role, catalyzes the reversible conversion of ribose-5-phosphate to ribulose 5-phosphate. The protein is Ribose-5-phosphate isomerase A of Erwinia tasmaniensis (strain DSM 17950 / CFBP 7177 / CIP 109463 / NCPPB 4357 / Et1/99).